The sequence spans 222 residues: Protein GrpE (222 aa).

Disordered regions lie at residues 1-21 and 200-222; these read MNDG…ENGQ and KGGP…PEGA.

This sequence belongs to the GrpE family. Homodimer.

The protein localises to the cytoplasm. Its function is as follows. Participates actively in the response to hyperosmotic and heat shock by preventing the aggregation of stress-denatured proteins, in association with DnaK and GrpE. It is the nucleotide exchange factor for DnaK and may function as a thermosensor. Unfolded proteins bind initially to DnaJ; upon interaction with the DnaJ-bound protein, DnaK hydrolyzes its bound ATP, resulting in the formation of a stable complex. GrpE releases ADP from DnaK; ATP binding to DnaK triggers the release of the substrate protein, thus completing the reaction cycle. Several rounds of ATP-dependent interactions between DnaJ, DnaK and GrpE are required for fully efficient folding. In Chelativorans sp. (strain BNC1), this protein is Protein GrpE.